Reading from the N-terminus, the 306-residue chain is Small ribosomal subunit protein uS2 (306 aa).

An N-acetylserine modification is found at Ser-2. Laminin-binding stretches follow at residues 161-180 and 205-229; these read IPCNNKGAHSVGLMWWMLAR and RDPEEIEKEEQAAAEKATTKEEFQG. [DE]-W-[ST] repeat units lie at residues 230-232, 245-247, 276-278, 286-288, and 304-306; these read EWT, DWS, and EWS. The segment at 242–306 is laminin-binding; sequence EVADWSEGVQ…EWTGTTTEWS (65 aa). Positions 247–306 are disordered; sequence SEGVQVPSVPIQQFTAERTDVPPAPKPTEDWSTQPASTDDWSAAPTAQASEWTGTTTEWS. A compositionally biased stretch (polar residues) spans 276 to 306; that stretch reads DWSTQPASTDDWSAAPTAQASEWTGTTTEWS.

This sequence belongs to the universal ribosomal protein uS2 family. As to quaternary structure, monomer (37LRP) and homodimer (67LR). Component of the small ribosomal subunit. Mature ribosomes consist of a small (40S) and a large (60S) subunit. The 40S subunit contains about 33 different proteins and 1 molecule of RNA (18S). The 60S subunit contains about 49 different proteins and 3 molecules of RNA (28S, 5.8S and 5S). Interacts with rps21. Interacts with several laminins including at least lamb1. Interacts with mdk. Acylated. Acylation may be a prerequisite for conversion of the monomeric 37 kDa laminin receptor precursor (37LRP) to the mature dimeric 67 kDa laminin receptor (67LR), and may provide a mechanism for membrane association. In terms of processing, cleaved by stromelysin-3 (ST3) at the cell surface. Cleavage by stromelysin-3 may be a mechanism to alter cell-extracellular matrix interactions.

It is found in the cell membrane. The protein localises to the cytoplasm. Its subcellular location is the nucleus. Its function is as follows. Required for the assembly and/or stability of the 40S ribosomal subunit. Required for the processing of the 20S rRNA-precursor to mature 18S rRNA in a late step of the maturation of 40S ribosomal subunits. Also functions as a cell surface receptor for laminin. Plays a role in cell adhesion to the basement membrane and in the consequent activation of signaling transduction pathways. May play a role in cell fate determination and tissue morphogenesis. The protein is Small ribosomal subunit protein uS2 (rpsa) of Xenopus laevis (African clawed frog).